We begin with the raw amino-acid sequence, 380 residues long: Cytochrome b (380 aa).

Helical transmembrane passes span 33-53 (FGSLLGLCLISQILTGLFLAM), 77-98 (WLIRNLHANGASFFFICIYFHI), 113-133 (WNIGVVLLLLVMMTAFVGYVL), and 178-198 (FFAFHFLFPFVILAMTILHLL). Heme b is bound by residues H83 and H97. Heme b contacts are provided by H182 and H196. Residue H201 coordinates a ubiquinone. Helical transmembrane passes span 226-246 (YKDLLGFAILLVALASLALFS), 288-308 (LGGVLALLASILVLMVVPFLH), 320-340 (VSQFLFWTLIADVAILTWIGG), and 347-367 (FIIIGQVASVLYFSLFLVFFP).

The protein belongs to the cytochrome b family. As to quaternary structure, the cytochrome bc1 complex contains 3 respiratory subunits (MT-CYB, CYC1 and UQCRFS1), 2 core proteins (UQCRC1 and UQCRC2) and probably 6 low-molecular weight proteins. Heme b serves as cofactor.

Its subcellular location is the mitochondrion inner membrane. Its function is as follows. Component of the ubiquinol-cytochrome c reductase complex (complex III or cytochrome b-c1 complex) that is part of the mitochondrial respiratory chain. The b-c1 complex mediates electron transfer from ubiquinol to cytochrome c. Contributes to the generation of a proton gradient across the mitochondrial membrane that is then used for ATP synthesis. The polypeptide is Cytochrome b (mt-cyb) (Sarda sarda (Atlantic bonito)).